The sequence spans 644 residues: Acetyl-coenzyme A synthetase (644 aa).

Residues 189–192 (RGGK) and T307 each bind CoA. ATP-binding positions include 383 to 385 (GEP), 407 to 412 (DTWWQT), D496, and R511. S519 is a CoA binding site. R522 contacts ATP. The Mg(2+) site is built by V533, H535, and V538. Residue R580 coordinates CoA. N6-acetyllysine is present on K605.

It belongs to the ATP-dependent AMP-binding enzyme family. Mg(2+) serves as cofactor. Post-translationally, acetylated. Deacetylation by the SIR2-homolog deacetylase activates the enzyme.

The catalysed reaction is acetate + ATP + CoA = acetyl-CoA + AMP + diphosphate. Catalyzes the conversion of acetate into acetyl-CoA (AcCoA), an essential intermediate at the junction of anabolic and catabolic pathways. AcsA undergoes a two-step reaction. In the first half reaction, AcsA combines acetate with ATP to form acetyl-adenylate (AcAMP) intermediate. In the second half reaction, it can then transfer the acetyl group from AcAMP to the sulfhydryl group of CoA, forming the product AcCoA. The sequence is that of Acetyl-coenzyme A synthetase from Rubrobacter xylanophilus (strain DSM 9941 / JCM 11954 / NBRC 16129 / PRD-1).